A 259-amino-acid chain; its full sequence is Phosphate import ATP-binding protein PstB 1 (259 aa).

The ABC transporter domain occupies 13 to 254 (IQVRGLEFFY…PSKTQTEDYI (242 aa)). 45 to 52 (GPSGCGKS) contacts ATP.

Belongs to the ABC transporter superfamily. Phosphate importer (TC 3.A.1.7) family. As to quaternary structure, the complex is composed of two ATP-binding proteins (PstB), two transmembrane proteins (PstC and PstA) and a solute-binding protein (PstS).

It localises to the cell inner membrane. It carries out the reaction phosphate(out) + ATP + H2O = ADP + 2 phosphate(in) + H(+). Part of the ABC transporter complex PstSACB involved in phosphate import. Responsible for energy coupling to the transport system. The sequence is that of Phosphate import ATP-binding protein PstB 1 from Pseudomonas savastanoi pv. phaseolicola (strain 1448A / Race 6) (Pseudomonas syringae pv. phaseolicola (strain 1448A / Race 6)).